A 334-amino-acid chain; its full sequence is Replication-associated protein (334 aa).

The 103-residue stretch at 9–111 (RLQSKYVFLT…DGDIKTRGDF (103 aa)) folds into the CRESS-DNA virus Rep endonuclease domain. The RCR-1 motif lies at 16-19 (FLTY). Positions 50, 58, and 60 each coordinate a divalent metal cation. Positions 58–60 (HYH) match the RCR-2 motif. The active-site For DNA cleavage activity is Tyr98. The short motif at 98 to 101 (YISK) is the RCR-3 element. Residue Asp102 coordinates a divalent metal cation. The segment at 160-172 (SANKLFPPQPEQY) is oligomerization. 213-220 (GPTRTGKT) provides a ligand contact to ATP. The tract at residues 236 to 254 (IDFTNYDEHATYNIIDDIP) is transactivation. The Nuclear localization signal signature appears at 276–286 (KYGKKKKIKGG).

It belongs to the geminiviridae Rep protein family. Homooligomer. Rep binds to repeated DNA motifs (iterons). Forms the O-complex, which is a Rep-DNA complex involved in the initiation of RCR. Part of the C- and V-complexes which are RepA-Rep-DNA complexes involved in the c-sense and v-sense transcription. It depends on Mg(2+) as a cofactor. Requires Mn(2+) as cofactor.

It localises to the host nucleus. Essential for the replication of viral ssDNA. The closed circular ssDNA genome is first converted to a superhelical dsDNA. Rep binds a specific region at the genome origin of replication. It introduces an endonucleolytic nick within the conserved sequence 5'-TAATATTAC-3' in the intergenic region of the genome present in all geminiviruses, thereby initiating the rolling circle replication (RCR). Following cleavage, binds covalently to the 5'-phosphate of DNA as a tyrosyl ester. The cleavage gives rise to a free 3'-OH that serves as a primer for the cellular DNA polymerase. The polymerase synthesizes the (+) strand DNA by rolling circle mechanism. After one round of replication, a Rep-catalyzed nucleotidyl transfer reaction releases a circular single-stranded virus genome, thereby terminating the replication. Displays origin-specific DNA cleavage, nucleotidyl transferase, ATPase and helicase activities. Acts a an inhibitor of C-sense gene transcription. The sequence is that of Replication-associated protein from Phaseolus vulgaris (Kidney bean).